A 2465-amino-acid chain; its full sequence is Protein DOP1A (2465 aa).

Disordered regions lie at residues 559 to 600 (PSGQ…SSES), 625 to 646 (GAAA…TVGS), and 705 to 733 (TEHQ…KEKN). The segment covering 633–646 (STSSETETASTVGS) has biased composition (low complexity). Over residues 707–733 (HQGDLGREQGETSKWDRNSQGDVKEKN) the composition is skewed to basic and acidic residues. Ser1266 bears the Phosphoserine mark. Composition is skewed to basic and acidic residues over residues 1282 to 1291 (EKETIVKESG) and 1305 to 1315 (KKDDDKKKSSN). Residues 1282–1315 (EKETIVKESGKQPGAKPKVKLARKKDDDKKKSSN) form a disordered region.

Belongs to the DOP1 family.

The protein localises to the golgi apparatus membrane. May be involved in protein traffic between late Golgi and early endosomes. The sequence is that of Protein DOP1A from Homo sapiens (Human).